The following is a 389-amino-acid chain: tRNA (cytosine(72)-C(5))-methyltransferase (389 aa).

Residues 92-167 (LPVVVANKYA…LAVEVTLPKF (76 aa)) form the PUA domain. S-adenosyl-L-methionine-binding positions include 209-215 (AAAPGGK), Asp-233, Arg-238, Asp-260, Asp-277, and Tyr-304. Cys-327 (nucleophile) is an active-site residue.

It belongs to the class I-like SAM-binding methyltransferase superfamily. RsmB/NOP family.

It catalyses the reaction cytidine(72) in tRNA + S-adenosyl-L-methionine = 5-methylcytidine(72) in tRNA + S-adenosyl-L-homocysteine + H(+). It carries out the reaction cytidine(72) in tRNA(Thr) + S-adenosyl-L-methionine = 5-methylcytidine(72) in tRNA(Thr) + S-adenosyl-L-homocysteine + H(+). The enzyme catalyses cytidine(72) in tRNA(Cys) + S-adenosyl-L-methionine = 5-methylcytidine(72) in tRNA(Cys) + S-adenosyl-L-homocysteine + H(+). In terms of biological role, S-adenosyl-L-methionine-dependent methyltransferase that specifically methylates the C5 position of cytosine 72 in several tRNAs. This modification appears to slightly promote the thermal stability of P.horikoshii tRNAs, but does not affect their amino acid accepting activity. Four elements in the acceptor stems of tRNAs are essential for substrate recognition by this enzyme: the target site C72, the 3'-CCA terminus, U73 or G73, and the second base pair C2:G71. This chain is tRNA (cytosine(72)-C(5))-methyltransferase, found in Pyrococcus horikoshii (strain ATCC 700860 / DSM 12428 / JCM 9974 / NBRC 100139 / OT-3).